A 274-amino-acid polypeptide reads, in one-letter code: DNA repair protein Rad1 (274 aa).

It belongs to the rad1 family. Component of the 9-1-1 checkpoint clamp complex consisting of Rad9 isoform A, Rad1 and Hus1-like; the interaction with Hus1-like is direct. Does not interact directly with Rad9; this interaction is probably mediated by Hus1-like. This complex probably also forms with Rad9 isoform B, however 9-1-1 complex containing Rad9 isoform A localizes to the nuclear periphery. As to expression, expressed in ovary.

The protein resides in the cytoplasm. The protein localises to the nucleus. Its subcellular location is the nucleus envelope. This Drosophila melanogaster (Fruit fly) protein is DNA repair protein Rad1.